A 360-amino-acid polypeptide reads, in one-letter code: Nicotinate-nucleotide--dimethylbenzimidazole phosphoribosyltransferase (360 aa).

Glu-327 functions as the Proton acceptor in the catalytic mechanism.

This sequence belongs to the CobT family.

The enzyme catalyses 5,6-dimethylbenzimidazole + nicotinate beta-D-ribonucleotide = alpha-ribazole 5'-phosphate + nicotinate + H(+). Its pathway is nucleoside biosynthesis; alpha-ribazole biosynthesis; alpha-ribazole from 5,6-dimethylbenzimidazole: step 1/2. Functionally, catalyzes the synthesis of alpha-ribazole-5'-phosphate from nicotinate mononucleotide (NAMN) and 5,6-dimethylbenzimidazole (DMB). The sequence is that of Nicotinate-nucleotide--dimethylbenzimidazole phosphoribosyltransferase from Shewanella baltica (strain OS155 / ATCC BAA-1091).